Here is a 200-residue protein sequence, read N- to C-terminus: MKSLLFCCLFGTFLATGMCLECEICIGLGLECNTWTKTCDANQDTCVTFQTEVIRAPVSLSLISKSCGTSDTCHLNYVETSPHNELTVKTKRTCCTGEECKTLPPPVLGHKVNPPNGLQCPGCLGLSSKECTEHLVSCRGSENQCLSIIGKEFGLFFRALSYKGCATESLCTLFEKRFWNVLEDVEVDFKCTPALPKSSQ.

An N-terminal signal peptide occupies residues 1–19 (MKSLLFCCLFGTFLATGMC). Disulfide bonds link cysteine 22–cysteine 46, cysteine 25–cysteine 32, cysteine 39–cysteine 67, cysteine 73–cysteine 94, cysteine 95–cysteine 100, cysteine 120–cysteine 145, cysteine 138–cysteine 165, and cysteine 171–cysteine 191.

This sequence belongs to the CNF-like-inhibitor family. Heterotrimer of 2 subunits A and 1 subunit B; non-covalently linked. As to expression, expressed by the liver.

Its subcellular location is the secreted. Functionally, inhibits the enzymatic activity of all phospholipase A2 tested, binding with micromole to nanomole affinity. The protein is Phospholipase A2 inhibitor NAI of Notechis ater (Black tiger snake).